Consider the following 459-residue polypeptide: uncharacterized protein (459 aa).

2 helical membrane passes run 53–75 (IPLLPVLALSVGALTVLGQGLTL) and 111–133 (ARIARVLLLVAGVFTLVIVCLCA). The tract at residues 174–196 (HLDNPSAPHPSENPQSRAHPKQN) is disordered.

The protein resides in the cell membrane. This is an uncharacterized protein from Treponema pallidum (strain Nichols).